Reading from the N-terminus, the 407-residue chain is Arylacetamide deacetylase-like 4 (407 aa).

Over 1 to 4 the chain is Cytoplasmic; it reads MAVP. The chain crosses the membrane as a helical; Signal-anchor for type II membrane protein span at residues 5-25; it reads WLVLLLALPIFFLGVFVWAVF. The Lumenal segment spans residues 26-407; the sequence is EHFLTTDIPA…NAVVSYIKGI (382 aa). The short motif at 119-121 is the Involved in the stabilization of the negatively charged intermediate by the formation of the oxyanion hole element; sequence HGG. N-linked (GlcNAc...) asparagine glycosylation is present at asparagine 168. The active site involves serine 193. The N-linked (GlcNAc...) asparagine glycan is linked to asparagine 269. Residues aspartate 347 and histidine 377 contribute to the active site.

Belongs to the 'GDXG' lipolytic enzyme family.

The protein resides in the membrane. The polypeptide is Arylacetamide deacetylase-like 4 (AADACL4) (Homo sapiens (Human)).